Consider the following 244-residue polypeptide: Phosphoadenosine 5'-phosphosulfate reductase (244 aa).

The active-site Nucleophile; cysteine thiosulfonate intermediate is Cys239.

This sequence belongs to the PAPS reductase family. CysH subfamily.

Its subcellular location is the cytoplasm. It catalyses the reaction [thioredoxin]-disulfide + sulfite + adenosine 3',5'-bisphosphate + 2 H(+) = [thioredoxin]-dithiol + 3'-phosphoadenylyl sulfate. It functions in the pathway sulfur metabolism; hydrogen sulfide biosynthesis; sulfite from sulfate: step 3/3. In terms of biological role, catalyzes the formation of sulfite from phosphoadenosine 5'-phosphosulfate (PAPS) using thioredoxin as an electron donor. This Salmonella typhi protein is Phosphoadenosine 5'-phosphosulfate reductase.